Reading from the N-terminus, the 281-residue chain is Large ribosomal subunit protein uL2 (281 aa).

A disordered region spans residues Thr222–Lys281.

This sequence belongs to the universal ribosomal protein uL2 family. In terms of assembly, part of the 50S ribosomal subunit. Forms a bridge to the 30S subunit in the 70S ribosome.

Functionally, one of the primary rRNA binding proteins. Required for association of the 30S and 50S subunits to form the 70S ribosome, for tRNA binding and peptide bond formation. It has been suggested to have peptidyltransferase activity; this is somewhat controversial. Makes several contacts with the 16S rRNA in the 70S ribosome. The sequence is that of Large ribosomal subunit protein uL2 from Mesoplasma florum (strain ATCC 33453 / NBRC 100688 / NCTC 11704 / L1) (Acholeplasma florum).